A 610-amino-acid polypeptide reads, in one-letter code: 1,8-cineol synthase, chloroplastic (610 aa).

A chloroplast-targeting transit peptide spans 1–51; it reads MNHHLIITPIFHLQIMLPVATLKRPPPPAATCSIYSFSRGTPSLVSKARLS. (2E)-geranyl diphosphate is bound by residues Arg322, Asp359, Asp363, Arg500, and Asn503. Mg(2+)-binding residues include Asp359 and Asp363. Positions 359-363 match the DDXXD motif motif; sequence DDVYD. Mg(2+)-binding residues include Asn503, Thr507, and Glu511.

It belongs to the terpene synthase family. Tpsb subfamily. In terms of assembly, monomer. The cofactor is Mg(2+). Mn(2+) serves as cofactor. As to expression, confined to buds and flowers.

The protein resides in the plastid. The protein localises to the chloroplast. It carries out the reaction (2E)-geranyl diphosphate + H2O = 1,8-cineole + diphosphate. The catalysed reaction is (2E)-geranyl diphosphate = limonene + diphosphate. The enzyme catalyses (2E)-geranyl diphosphate = sabinene + diphosphate. It catalyses the reaction (2E)-geranyl diphosphate = (E)-beta-ocimene + diphosphate. It carries out the reaction (2E)-geranyl diphosphate = beta-myrcene + diphosphate. The catalysed reaction is (2E)-geranyl diphosphate = alpha-pinene + diphosphate. The enzyme catalyses (2E)-geranyl diphosphate + H2O = (S)-alpha-terpineol + diphosphate. The protein operates within secondary metabolite biosynthesis; terpenoid biosynthesis. Its function is as follows. Monoterpene synthase involved in the biosynthesis of monoterpene natural products of the 'cineole cassette', volatile compounds present in floral scent. Catalyzes the conversion of (2E)-geranyl diphosphate (GPP) into 1,8-cineole and, as minor products, limonene, sabinene, (E)-beta-ocimene, beta-myrcene, alpha-pinene and alpha-terpineol. The protein is 1,8-cineol synthase, chloroplastic of Nicotiana suaveolens (Australian tobacco).